Reading from the N-terminus, the 218-residue chain is Histidine biosynthesis bifunctional protein HisIE (218 aa).

A phosphoribosyl-AMP cyclohydrolase region spans residues 1-118 (MTDLSELNFD…DAPDTGLDGT (118 aa)). The phosphoribosyl-ATP pyrophosphohydrolase stretch occupies residues 119-218 (LERVYATITE…SGLKGPKEVG (100 aa)).

This sequence in the N-terminal section; belongs to the PRA-CH family. The protein in the C-terminal section; belongs to the PRA-PH family.

The protein localises to the cytoplasm. The enzyme catalyses 1-(5-phospho-beta-D-ribosyl)-ATP + H2O = 1-(5-phospho-beta-D-ribosyl)-5'-AMP + diphosphate + H(+). It catalyses the reaction 1-(5-phospho-beta-D-ribosyl)-5'-AMP + H2O = 1-(5-phospho-beta-D-ribosyl)-5-[(5-phospho-beta-D-ribosylamino)methylideneamino]imidazole-4-carboxamide. It functions in the pathway amino-acid biosynthesis; L-histidine biosynthesis; L-histidine from 5-phospho-alpha-D-ribose 1-diphosphate: step 2/9. The protein operates within amino-acid biosynthesis; L-histidine biosynthesis; L-histidine from 5-phospho-alpha-D-ribose 1-diphosphate: step 3/9. The protein is Histidine biosynthesis bifunctional protein HisIE (hisI) of Deinococcus radiodurans (strain ATCC 13939 / DSM 20539 / JCM 16871 / CCUG 27074 / LMG 4051 / NBRC 15346 / NCIMB 9279 / VKM B-1422 / R1).